The primary structure comprises 238 residues: Ribosomal RNA small subunit methyltransferase G (238 aa).

S-adenosyl-L-methionine-binding positions include Gly-77, Phe-82, 128–129 (AE), and Arg-147.

Belongs to the methyltransferase superfamily. RNA methyltransferase RsmG family.

The protein localises to the cytoplasm. In terms of biological role, specifically methylates the N7 position of guanine in position 535 of 16S rRNA. The protein is Ribosomal RNA small subunit methyltransferase G of Listeria monocytogenes serotype 4b (strain F2365).